We begin with the raw amino-acid sequence, 206 residues long: Large ribosomal subunit protein uL4 (206 aa).

Residues 63–97 (MYKQKGTGRARHHSARAPQFRGGGKAHGPVVRSHE) form a disordered region. A compositionally biased stretch (basic residues) spans 64–77 (YKQKGTGRARHHSA).

It belongs to the universal ribosomal protein uL4 family. In terms of assembly, part of the 50S ribosomal subunit.

One of the primary rRNA binding proteins, this protein initially binds near the 5'-end of the 23S rRNA. It is important during the early stages of 50S assembly. It makes multiple contacts with different domains of the 23S rRNA in the assembled 50S subunit and ribosome. In terms of biological role, forms part of the polypeptide exit tunnel. The polypeptide is Large ribosomal subunit protein uL4 (Rhizobium etli (strain CIAT 652)).